Consider the following 222-residue polypeptide: Germin-like protein 11-1 (222 aa).

A signal peptide spans 1 to 23; that stretch reads MKLSTVLCCYLLLLGLFAPEIIS. Residues C32 and C49 are joined by a disulfide bond. The Cupin type-1 domain occupies 72–195; that stretch reads DNMVRSSANI…AMFAPDSEVA (124 aa). Mn(2+)-binding residues include H111, H113, E118, and H157.

Belongs to the germin family. Oligomer (believed to be a pentamer but probably hexamer).

It is found in the secreted. The protein localises to the extracellular space. The protein resides in the apoplast. Its function is as follows. May play a role in plant defense. Probably has no oxalate oxidase activity even if the active site is conserved. This Oryza sativa subsp. japonica (Rice) protein is Germin-like protein 11-1.